Consider the following 263-residue polypeptide: Insertion sequence IS21-like putative ATP-binding protein (263 aa).

114-121 (GPSGTGKT) contacts ATP.

It belongs to the IS21/IS1162 putative ATP-binding protein family.

In Bacteroides fragilis, this protein is Insertion sequence IS21-like putative ATP-binding protein (tnpB).